Reading from the N-terminus, the 1396-residue chain is Major capsid protein (1396 aa).

The protein belongs to the herpesviridae major capsid protein family. In terms of assembly, homomultimer. Makes the hexons and eleven out of twelve pentons. Interacts with triplex proteins 1/TRX1 and 2/TRX2; adjacent capsomers are linked together in groups of three by triplexes, heterotrimeric complexes composed of one molecule of TRX1 and two molecules of TRX2. Interacts with scaffold protein; this interaction allows efficient MCP transport to the host nucleus. Interacts with capsid vertex component 2/CVC2. Interacts with the small capsomere-interacting protein/SCP.

The protein localises to the virion. It is found in the host nucleus. Functionally, self-assembles to form an icosahedral capsid with a T=16 symmetry, about 200 nm in diameter, and consisting of 150 hexons and 12 pentons (total of 162 capsomers). Hexons form the edges and faces of the capsid and are each composed of six MCP molecules. In contrast, one penton is found at each of the 12 vertices. Eleven of the pentons are MCP pentamers, while the last vertex is occupied by the portal complex. The capsid is surrounded by a layer of proteinaceous material designated the tegument which, in turn, is enclosed in an envelope of host cell-derived lipids containing virus-encoded glycoproteins. The protein is Major capsid protein of Varicella-zoster virus (strain Dumas) (HHV-3).